We begin with the raw amino-acid sequence, 79 residues long: MSDTAERVKKIVIEHLGVEESKVTESASFIDDLGADSLDTVELVMAFEEEFGIEIPDDAAEKILTVKDAIDFINQKTAA.

The region spanning 2 to 77 (SDTAERVKKI…DAIDFINQKT (76 aa)) is the Carrier domain. Serine 37 bears the O-(pantetheine 4'-phosphoryl)serine mark.

Belongs to the acyl carrier protein (ACP) family. Post-translationally, 4'-phosphopantetheine is transferred from CoA to a specific serine of apo-ACP by AcpS. This modification is essential for activity because fatty acids are bound in thioester linkage to the sulfhydryl of the prosthetic group.

It is found in the cytoplasm. It functions in the pathway lipid metabolism; fatty acid biosynthesis. Its function is as follows. Carrier of the growing fatty acid chain in fatty acid biosynthesis. This is Acyl carrier protein from Rhodospirillum centenum (strain ATCC 51521 / SW).